A 491-amino-acid polypeptide reads, in one-letter code: UDP-N-acetylmuramate--L-alanine ligase (491 aa).

126–132 (GTHGKTT) provides a ligand contact to ATP.

It belongs to the MurCDEF family.

The protein resides in the cytoplasm. The catalysed reaction is UDP-N-acetyl-alpha-D-muramate + L-alanine + ATP = UDP-N-acetyl-alpha-D-muramoyl-L-alanine + ADP + phosphate + H(+). It functions in the pathway cell wall biogenesis; peptidoglycan biosynthesis. Cell wall formation. This chain is UDP-N-acetylmuramate--L-alanine ligase, found in Salmonella gallinarum (strain 287/91 / NCTC 13346).